We begin with the raw amino-acid sequence, 141 residues long: Cystatin (141 aa).

The signal sequence occupies residues 1-26; that stretch reads MVHSQLPVAASLRLLCALLLLPSATM. Residues 29–129 form the Cystatin domain; sequence GGLSPRSVTD…CRFQVWSRPW (101 aa). The Secondary area of contact motif lies at 73–77; it reads QVVAG. 2 disulfides stabilise this stretch: Cys-91–Cys-107 and Cys-120–Cys-140.

This sequence belongs to the cystatin family. In terms of tissue distribution, expressed by the venom gland at an extremely low level (at protein level).

The protein resides in the secreted. Functionally, inhibits various C1 cysteine proteases including cathepsin L, papain and cathepsin B. This protein has no toxic activity and its function in the venom is unknown. It may play a role as a housekeeping or regulatory protein. The sequence is that of Cystatin from Cryptophis nigrescens (Eastern small-eyed snake).